Consider the following 447-residue polypeptide: Na(+)-translocating NADH-quinone reductase subunit A (447 aa).

It belongs to the NqrA family. In terms of assembly, composed of six subunits; NqrA, NqrB, NqrC, NqrD, NqrE and NqrF.

It catalyses the reaction a ubiquinone + n Na(+)(in) + NADH + H(+) = a ubiquinol + n Na(+)(out) + NAD(+). Its function is as follows. NQR complex catalyzes the reduction of ubiquinone-1 to ubiquinol by two successive reactions, coupled with the transport of Na(+) ions from the cytoplasm to the periplasm. NqrA to NqrE are probably involved in the second step, the conversion of ubisemiquinone to ubiquinol. The polypeptide is Na(+)-translocating NADH-quinone reductase subunit A (Haemophilus influenzae (strain PittGG)).